Consider the following 225-residue polypeptide: uncharacterized protein (225 aa).

This is an uncharacterized protein from Amsacta moorei entomopoxvirus (AmEPV).